A 346-amino-acid polypeptide reads, in one-letter code: Biotin synthase (346 aa).

A Radical SAM core domain is found at 38 to 256 (QQVQVSTLLS…IAVARIMMPT (219 aa)). Positions 53, 57, and 60 each coordinate [4Fe-4S] cluster. Residues cysteine 97, cysteine 128, cysteine 188, and arginine 260 each contribute to the [2Fe-2S] cluster site.

This sequence belongs to the radical SAM superfamily. Biotin synthase family. Homodimer. [4Fe-4S] cluster serves as cofactor. [2Fe-2S] cluster is required as a cofactor.

The enzyme catalyses (4R,5S)-dethiobiotin + (sulfur carrier)-SH + 2 reduced [2Fe-2S]-[ferredoxin] + 2 S-adenosyl-L-methionine = (sulfur carrier)-H + biotin + 2 5'-deoxyadenosine + 2 L-methionine + 2 oxidized [2Fe-2S]-[ferredoxin]. It functions in the pathway cofactor biosynthesis; biotin biosynthesis; biotin from 7,8-diaminononanoate: step 2/2. In terms of biological role, catalyzes the conversion of dethiobiotin (DTB) to biotin by the insertion of a sulfur atom into dethiobiotin via a radical-based mechanism. This Salmonella dublin (strain CT_02021853) protein is Biotin synthase.